A 195-amino-acid polypeptide reads, in one-letter code: Large ribosomal subunit protein uL5 (195 aa).

The protein belongs to the universal ribosomal protein uL5 family. As to quaternary structure, part of the 50S ribosomal subunit; part of the 5S rRNA/L5/L18/L25 subcomplex. Contacts the 5S rRNA and the P site tRNA. Forms a bridge to the 30S subunit in the 70S ribosome.

In terms of biological role, this is one of the proteins that bind and probably mediate the attachment of the 5S RNA into the large ribosomal subunit, where it forms part of the central protuberance. In the 70S ribosome it contacts protein S13 of the 30S subunit (bridge B1b), connecting the 2 subunits; this bridge is implicated in subunit movement. Contacts the P site tRNA; the 5S rRNA and some of its associated proteins might help stabilize positioning of ribosome-bound tRNAs. This is Large ribosomal subunit protein uL5 from Pelodictyon phaeoclathratiforme (strain DSM 5477 / BU-1).